The following is a 432-amino-acid chain: Glutamate-1-semialdehyde 2,1-aminomutase (432 aa).

Lys269 is subject to N6-(pyridoxal phosphate)lysine.

The protein belongs to the class-III pyridoxal-phosphate-dependent aminotransferase family. HemL subfamily. As to quaternary structure, homodimer. It depends on pyridoxal 5'-phosphate as a cofactor.

It localises to the cytoplasm. It catalyses the reaction (S)-4-amino-5-oxopentanoate = 5-aminolevulinate. It functions in the pathway porphyrin-containing compound metabolism; protoporphyrin-IX biosynthesis; 5-aminolevulinate from L-glutamyl-tRNA(Glu): step 2/2. The protein operates within porphyrin-containing compound metabolism; chlorophyll biosynthesis. The protein is Glutamate-1-semialdehyde 2,1-aminomutase of Chloroherpeton thalassium (strain ATCC 35110 / GB-78).